We begin with the raw amino-acid sequence, 378 residues long: Alginate lyase (378 aa).

An N-terminal signal peptide occupies residues 1 to 28; that stretch reads MQTPKLIRPTLLSMAILSSMAWATGASA. Residues 67–68, 140–141, and Tyr258 each bind substrate; these read SK and HT.

Belongs to the polysaccharide lyase 5 family.

The protein resides in the periplasm. It catalyses the reaction Eliminative cleavage of alginate to give oligosaccharides with 4-deoxy-alpha-L-erythro-hex-4-enuronosyl groups at their non-reducing ends and beta-D-mannuronate at their reducing end.. With respect to regulation, the monovalent cation sodium enhances activity but is not absolutely required. In terms of biological role, catalyzes the depolymerization of alginate by cleaving the beta-1,4 glycosidic bond between two adjacent sugar residues via a beta-elimination mechanism. Degrades deacetylated polymannuronate (polyM) alginate from P.aeruginosa more efficiently than non-deacetylated polyM and alginate from M.pyrifera. AlgL from P.syringae also degrades its own alginate, which may indicate a role in cleaving preformed alginate and/or in determining the length of the alginate polymer. May serve to degrade mislocalized alginate that is trapped in the periplasmic space. This Pseudomonas syringae pv. syringae protein is Alginate lyase.